A 546-amino-acid polypeptide reads, in one-letter code: Methionine--tRNA ligase (546 aa).

The short motif at 15–25 is the 'HIGH' region element; the sequence is PYANGPIHLGH. Positions 146, 149, 159, and 162 each coordinate Zn(2+). Residues 332 to 336 carry the 'KMSKS' region motif; it reads KMSKS. An ATP-binding site is contributed by Lys335.

This sequence belongs to the class-I aminoacyl-tRNA synthetase family. MetG type 1 subfamily. In terms of assembly, monomer. Zn(2+) serves as cofactor.

It localises to the cytoplasm. The enzyme catalyses tRNA(Met) + L-methionine + ATP = L-methionyl-tRNA(Met) + AMP + diphosphate. Its function is as follows. Is required not only for elongation of protein synthesis but also for the initiation of all mRNA translation through initiator tRNA(fMet) aminoacylation. This is Methionine--tRNA ligase from Coxiella burnetii (strain RSA 331 / Henzerling II).